The primary structure comprises 201 residues: Glycerol-3-phosphate acyltransferase (201 aa).

Helical transmembrane passes span Leu3–Leu23, Trp53–Gly73, His80–Phe100, Ile115–Phe135, and Phe153–Tyr175.

It belongs to the PlsY family. In terms of assembly, probably interacts with PlsX.

It localises to the cell inner membrane. The enzyme catalyses an acyl phosphate + sn-glycerol 3-phosphate = a 1-acyl-sn-glycero-3-phosphate + phosphate. The protein operates within lipid metabolism; phospholipid metabolism. In terms of biological role, catalyzes the transfer of an acyl group from acyl-phosphate (acyl-PO(4)) to glycerol-3-phosphate (G3P) to form lysophosphatidic acid (LPA). This enzyme utilizes acyl-phosphate as fatty acyl donor, but not acyl-CoA or acyl-ACP. The protein is Glycerol-3-phosphate acyltransferase of Pasteurella multocida (strain Pm70).